The sequence spans 85 residues: U4-theraphotoxin-Hhn1l (85 aa).

Residues methionine 1–alanine 22 form the signal peptide. A propeptide spanning residues glutamate 23–arginine 48 is cleaved from the precursor. Cystine bridges form between cysteine 52–cysteine 66, cysteine 56–cysteine 77, and cysteine 71–cysteine 82.

Belongs to the neurotoxin 12 (Hwtx-2) family. 02 (Hwtx-2) subfamily. In terms of tissue distribution, expressed by the venom gland.

The protein resides in the secreted. Postsynaptic neurotoxin. The chain is U4-theraphotoxin-Hhn1l from Cyriopagopus hainanus (Chinese bird spider).